The primary structure comprises 274 residues: 3-methyl-2-oxobutanoate hydroxymethyltransferase (274 aa).

Mg(2+) is bound by residues D49 and D88. 3-methyl-2-oxobutanoate contacts are provided by residues 49 to 50, D88, and K118; that span reads DS. Mg(2+) is bound at residue E120. E187 functions as the Proton acceptor in the catalytic mechanism.

This sequence belongs to the PanB family. As to quaternary structure, homodecamer; pentamer of dimers. It depends on Mg(2+) as a cofactor.

Its subcellular location is the cytoplasm. The enzyme catalyses 3-methyl-2-oxobutanoate + (6R)-5,10-methylene-5,6,7,8-tetrahydrofolate + H2O = 2-dehydropantoate + (6S)-5,6,7,8-tetrahydrofolate. It participates in cofactor biosynthesis; (R)-pantothenate biosynthesis; (R)-pantoate from 3-methyl-2-oxobutanoate: step 1/2. Catalyzes the reversible reaction in which hydroxymethyl group from 5,10-methylenetetrahydrofolate is transferred onto alpha-ketoisovalerate to form ketopantoate. This chain is 3-methyl-2-oxobutanoate hydroxymethyltransferase, found in Nitrobacter winogradskyi (strain ATCC 25391 / DSM 10237 / CIP 104748 / NCIMB 11846 / Nb-255).